A 1591-amino-acid chain; its full sequence is MGNAESQNVDHEFYGEKHASLGRKHTSRSLRLSHKTRRTRHASSGKAIHRNSEVSTRSSSTPSIPQSLAENGLEPFSQEGALDDFGDPIWVDRVDMGLRPVSYTDSSVTPSVDGSIVLTAASVQSMPDSEESRLYGDDATYLAEGGRRQCPYTSNGPTFMETASFKKKRSKSADIWREDSLEFSLSDLSQEHLTSNEEILGSAEEKDCEEARGMETEASPRQLSTCQRANSLGDLYAQKNSGVKANGGPRNRFSSYCRNLVSDIPDLAKHKMPPAAAEETPPYSNYNTLPCRKSHCLSEGATNPQISLSKSMQGRRAKTTQDVNTGEGSEFADSGIEGATTDTDLLSRRSNATNSSYSPPTGRAFVGSDSGSSSTGDRARQGVYENFRRELEMSTTNSESLEEAGSAHSDEQSSGTLSSPGQSDILLTAAQGTVRKAGALAVKNFLVHKKNKKVESATRRKWKHYWVSLKGCTLFFYETDGRSGIDHNSVPKHAVWVENSIVQAVPEHPKKDFVFCLSNSLGDAFLFQTTSQTELENWITAIHSACAAAVARHHHKEDTLRLLKSEIKKLEQKIDMDEKMKKMGEMQLSSVTDSKKKKTILDQIFVWEQNLEQFQMDLFRFRCYLASLQGGELPNPKRLLAFASRPTKVAMGRLGIFSVSSFHALVAARTGEIGVRRRTQAMSRSASKRRSRFSSLWGLDTTSKKKQGRPTINQVFGEGTDAVKRSLEGIFDDTVPDGKREKEVVLPSVHQHNPDCDIWVHEYFTPSWFCLPNNQPALTVVRPGDTARDTLELICKTHQLDHSAHYLRLKFLMENRVQFYIPQPEEDIYELLYKEIEICPKVTQNIHIEKSDAAADNYGFLLSSVDEDGIRRLYVNSVKETGLASKKGLKAGDEILEINNRAAGTLNSSMLKDFLSQPSLGLLVRTYPEPEGGVELLENPPHRVDGPVDLGESPLAFLTSNPGHSLSSEQGSSAETAPEEGEGPDLESSDETDHSSKSTEQVAAFCRSLHEMSPSDSSPSPQDATSPQLATTRQLSDADKLRKVICELLETERTYVKDLNCLMERYLKPLQKETFLTQDELDVLFGNLTEMVEFQVEFLKTLEDGVRLVPDLEKLEKVDQFKKVLFSLGGSFLYYADRFKLYSAFCASHTKVPKVLVKAKTDTAFKAFLDAQNPRQQHSSTLESYLIKPIQRVLKYPLLLRELFALTDAESEEHYHLDVAIKTMNKVASHINEMQKIHEEFGAVFDQLIAEQTGEKKEVADLSMGDLLLHTSVIWLNPPASLGKWKKEPELAAFVFKTAVVLVYKDGSKQKKKLVGSHRLSIYEEWDPFRFRHMIPTEALQVRALPSADAEANAVCEIVHVKSESEGRPERVFHLCCSSPESRKDFLKSVHSILRDKHRRQLLKTESLPSAQQYVPFGGKRLCALKGARPAMSRAVSAPSKSLGRRRRRLARNRFTIDSDAISASSPEKEPQQPAGGGDTDRWVEEQFDLAQYEEQDDIKETDILSDDDEFCESLKGASVDRDLQEQLQAASISQRARGRRTLDSHASRMTQLKKQAALSGINGGLESASEEVIWVRREDFAPSRKLNTEI.

Residues Met1–Glu70 form a disordered region. A lipid anchor (N-myristoyl glycine) is attached at Gly2. Positions Asn8–Ala19 are enriched in basic and acidic residues. The span at Ser20–His49 shows a compositional bias: basic residues. Over residues Glu53–Ser67 the composition is skewed to low complexity. Ser231, Ser356, and Ser358 each carry phosphoserine. Disordered regions lie at residues Gln305–Arg380 and Met393–Gln422. Residues Thr340–Pro359 are compositionally biased toward polar residues. The segment covering Gly367–Gly376 has biased composition (low complexity). Residues Gln412–Gln422 are compositionally biased toward polar residues. The region spanning Val434–Ala549 is the PH 1 domain. At Ser695 the chain carries Phosphoserine. The region spanning Thr765–Leu832 is the RBD domain. Tyr829 carries the phosphotyrosine; by NTRK2 modification. A PDZ domain is found at Asn845–Ser908. The tract at residues Gly933–Gln1034 is disordered. Residues Leu958–Glu975 are compositionally biased toward polar residues. Positions Ala977–Asp990 are enriched in acidic residues. Over residues Pro1014–Gln1028 the composition is skewed to low complexity. The region spanning Lys1040 to Met1234 is the DH domain. One can recognise a PH 2 domain in the interval Asp1261–Lys1397. At Tyr1323 the chain carries Phosphotyrosine. Glycyl lysine isopeptide (Lys-Gly) (interchain with G-Cter in ubiquitin) cross-links involve residues Lys1404 and Lys1420. The interval Thr1456–Asp1481 is disordered. Phosphoserine is present on Ser1519.

The protein belongs to the TIAM family. Component of the Par polarity complex, composed of at least phosphorylated PRKCZ, PARD3 and TIAM1. Interacts with BAIAP2. Interacts (via PDZ domain) with CNTNAP4, SDC1 and SDC3 (via C-terminus). Interacts with CD44, PARD3 and MAPK8IP2. Interacts with EPHA8; regulates clathrin-mediated endocytosis of EPHA8. Interacts with NTRK2; mediates the activation of RAC1 by BDNF. In terms of processing, ubiquitinated. Undergoes 'Lys-48' ubiquitination at Lys-1404 and Lys-1420 by a CUL3(KBTBD6/7) E3 ubiquitin ligase complex composed of CUL3, RBX1, KBTBD6 and KBTBD7. 'Lys-48' ubiquitination at Lys-1404 and Lys-1420 triggers proteasomal degradation. Ubiquitination at Lys-1404 and Lys-1420 by CUL3(KBTBD6/7) also requires the membrane-associated protein GABARAP and may therefore be spatially restricted within the cell. In terms of tissue distribution, highly expressed in brain and testis and at low or moderate levels in almost all other normal tissues. Found in virtually all analyzed tumor cell lines including B- and T-lymphomas, neuroblastomas, melanomas and carcinomas.

It is found in the cell junction. It localises to the cell membrane. Its function is as follows. Guanyl-nucleotide exchange factor that activates RHO-like proteins and connects extracellular signals to cytoskeletal activities. Activates RAC1, CDC42, and to a lesser extent RHOA and their downstream signaling to regulate processes like cell adhesion and cell migration. The protein is Rho guanine nucleotide exchange factor TIAM1 of Mus musculus (Mouse).